Consider the following 187-residue polypeptide: Isopentenyl-diphosphate Delta-isomerase (187 aa).

The Mn(2+) site is built by H36, H43, and H80. Residues 41–178 (VRHRAFTALL…RQLRLCPWFE (138 aa)) enclose the Nudix hydrolase domain. Position 98 (E98) interacts with Mg(2+). E127 and E129 together coordinate Mn(2+). The active site involves E129.

Belongs to the IPP isomerase type 1 family. Mg(2+) serves as cofactor. Mn(2+) is required as a cofactor.

The protein resides in the cytoplasm. It catalyses the reaction isopentenyl diphosphate = dimethylallyl diphosphate. Its pathway is isoprenoid biosynthesis; dimethylallyl diphosphate biosynthesis; dimethylallyl diphosphate from isopentenyl diphosphate: step 1/1. Functionally, catalyzes the 1,3-allylic rearrangement of the homoallylic substrate isopentenyl (IPP) to its highly electrophilic allylic isomer, dimethylallyl diphosphate (DMAPP). The protein is Isopentenyl-diphosphate Delta-isomerase of Haloarcula marismortui (strain ATCC 43049 / DSM 3752 / JCM 8966 / VKM B-1809) (Halobacterium marismortui).